The chain runs to 348 residues: UDP-3-O-acylglucosamine N-acyltransferase (348 aa).

His241 functions as the Proton acceptor in the catalytic mechanism.

The protein belongs to the transferase hexapeptide repeat family. LpxD subfamily. As to quaternary structure, homotrimer.

It carries out the reaction a UDP-3-O-[(3R)-3-hydroxyacyl]-alpha-D-glucosamine + a (3R)-hydroxyacyl-[ACP] = a UDP-2-N,3-O-bis[(3R)-3-hydroxyacyl]-alpha-D-glucosamine + holo-[ACP] + H(+). It functions in the pathway bacterial outer membrane biogenesis; LPS lipid A biosynthesis. Its function is as follows. Catalyzes the N-acylation of UDP-3-O-acylglucosamine using 3-hydroxyacyl-ACP as the acyl donor. Is involved in the biosynthesis of lipid A, a phosphorylated glycolipid that anchors the lipopolysaccharide to the outer membrane of the cell. This chain is UDP-3-O-acylglucosamine N-acyltransferase, found in Neisseria meningitidis serogroup C (strain 053442).